Here is an 82-residue protein sequence, read N- to C-terminus: MANNKKDEQAAAATPISRLGYEACRDELIEVVRQLEQGGLDLDASLNLWERGEQLAKRCEEHLAGARKRIEDALAAGEADDD.

The protein belongs to the XseB family. Heterooligomer composed of large and small subunits.

Its subcellular location is the cytoplasm. The enzyme catalyses Exonucleolytic cleavage in either 5'- to 3'- or 3'- to 5'-direction to yield nucleoside 5'-phosphates.. Bidirectionally degrades single-stranded DNA into large acid-insoluble oligonucleotides, which are then degraded further into small acid-soluble oligonucleotides. The polypeptide is Exodeoxyribonuclease 7 small subunit (Mycobacterium avium (strain 104)).